The chain runs to 247 residues: MFMTRSEYDRGVNTFSPEGRLFQVEYAIEAIKLGSTAIGVKTKDAVVLGVEKRLTSPLMESHSVEKLFEIDSHIGCAISGLTADARTIIEHARVQTQNHRFTYDEPQGIESTTQSICDLALRFGEGEDGEERIMSRPFGVALLIAGIDEHGPQLYHSEPSGTYFRYEAKAIGSGSEPAKSELVKEFHKDMTLEEAEVLILKVLRQVMEEKLDSKNVQLAKVTAEGGFHIYNDEEMADAVAREQQRMD.

A Phosphothreonine modification is found at T55.

The protein belongs to the peptidase T1A family. In terms of assembly, the 26S proteasome consists of a 20S proteasome core and two 19S regulatory subunits. The 20S proteasome core is composed of 28 subunits that are arranged in four stacked rings, resulting in a barrel-shaped structure. The two end rings are each formed by seven alpha subunits, and the two central rings are each formed by seven beta subunits. The catalytic chamber with the active sites is on the inside of the barrel.

The protein resides in the cytoplasm. It localises to the nucleus. In terms of biological role, the proteasome is a multicatalytic proteinase complex which is characterized by its ability to cleave peptides with Arg, Phe, Tyr, Leu, and Glu adjacent to the leaving group at neutral or slightly basic pH. The proteasome has an ATP-dependent proteolytic activity. The chain is Probable proteasome subunit alpha type-5 (pup2) from Schizosaccharomyces pombe (strain 972 / ATCC 24843) (Fission yeast).